Reading from the N-terminus, the 274-residue chain is Nickel/cobalt efflux system RcnA (274 aa).

Residues 1–12 (MTEFTTLLQQGN) are Periplasmic-facing. The chain crosses the membrane as a helical span at residues 13 to 33 (AWFFIPSAILLGALHGLEPGH). The Cytoplasmic segment spans residues 34-56 (SKTMMAAFIIAIKGTIKQAVMLG). The helical transmembrane segment at 57–77 (LAATISHTAVVWLIAFGGMVI) threads the bilayer. The Periplasmic portion of the chain corresponds to 78–86 (SKRFTAQSA). Residues 87 to 107 (EPWLQLISAVIIISTAFWMFW) traverse the membrane as a helical segment. Residues 108 to 174 (RTWRGERNWL…FDGREVTNWQ (67 aa)) lie on the Cytoplasmic side of the membrane. Over residues 127 to 137 (HHHHDHEDHHD) the composition is skewed to basic and acidic residues. Positions 127 to 153 (HHHHDHEDHHDHGHHHHHEHGEYQDAH) are disordered. The helical transmembrane segment at 175 to 195 (ILLFGLTGGLIPCPAAITVLL) threads the bilayer. The Periplasmic segment spans residues 196-209 (ICIQLKALTLGATL). The helical transmembrane segment at 210–230 (VVSFSLGLALTLVTVSVGAAI) threads the bilayer. Residues 231-251 (SVQQVAKRWSGFNTLAKRAPY) lie on the Cytoplasmic side of the membrane. The helical transmembrane segment at 252–272 (FSSLLIGLVGVYMGVHGFMGI) threads the bilayer. The Periplasmic segment spans residues 273–274 (MR).

The protein belongs to the NiCoT transporter (TC 2.A.52) family. RcnA subfamily.

The protein resides in the cell inner membrane. In terms of biological role, efflux system for nickel and cobalt. The chain is Nickel/cobalt efflux system RcnA (rcnA) from Escherichia coli O6:K15:H31 (strain 536 / UPEC).